Reading from the N-terminus, the 237-residue chain is Ribonuclease PH (237 aa).

Phosphate-binding positions include Arg86 and 124–126 (GTR).

Belongs to the RNase PH family. As to quaternary structure, homohexameric ring arranged as a trimer of dimers.

The enzyme catalyses tRNA(n+1) + phosphate = tRNA(n) + a ribonucleoside 5'-diphosphate. Functionally, phosphorolytic 3'-5' exoribonuclease that plays an important role in tRNA 3'-end maturation. Removes nucleotide residues following the 3'-CCA terminus of tRNAs; can also add nucleotides to the ends of RNA molecules by using nucleoside diphosphates as substrates, but this may not be physiologically important. Probably plays a role in initiation of 16S rRNA degradation (leading to ribosome degradation) during starvation. The protein is Ribonuclease PH of Beijerinckia indica subsp. indica (strain ATCC 9039 / DSM 1715 / NCIMB 8712).